A 211-amino-acid chain; its full sequence is FMN-dependent NADH:quinone oxidoreductase (211 aa).

FMN-binding positions include serine 10 and 16–18 (STS).

This sequence belongs to the azoreductase type 1 family. In terms of assembly, homodimer. FMN serves as cofactor.

The enzyme catalyses 2 a quinone + NADH + H(+) = 2 a 1,4-benzosemiquinone + NAD(+). The catalysed reaction is N,N-dimethyl-1,4-phenylenediamine + anthranilate + 2 NAD(+) = 2-(4-dimethylaminophenyl)diazenylbenzoate + 2 NADH + 2 H(+). Quinone reductase that provides resistance to thiol-specific stress caused by electrophilic quinones. Its function is as follows. Also exhibits azoreductase activity. Catalyzes the reductive cleavage of the azo bond in aromatic azo compounds to the corresponding amines. The polypeptide is FMN-dependent NADH:quinone oxidoreductase (Frankia casuarinae (strain DSM 45818 / CECT 9043 / HFP020203 / CcI3)).